Reading from the N-terminus, the 372-residue chain is 4-hydroxy-3-methylbut-2-en-1-yl diphosphate synthase (flavodoxin) (372 aa).

Residues Cys-270, Cys-273, Cys-305, and Glu-312 each contribute to the [4Fe-4S] cluster site.

The protein belongs to the IspG family. [4Fe-4S] cluster serves as cofactor.

It catalyses the reaction (2E)-4-hydroxy-3-methylbut-2-enyl diphosphate + oxidized [flavodoxin] + H2O + 2 H(+) = 2-C-methyl-D-erythritol 2,4-cyclic diphosphate + reduced [flavodoxin]. It participates in isoprenoid biosynthesis; isopentenyl diphosphate biosynthesis via DXP pathway; isopentenyl diphosphate from 1-deoxy-D-xylulose 5-phosphate: step 5/6. In terms of biological role, converts 2C-methyl-D-erythritol 2,4-cyclodiphosphate (ME-2,4cPP) into 1-hydroxy-2-methyl-2-(E)-butenyl 4-diphosphate. In Vibrio vulnificus (strain CMCP6), this protein is 4-hydroxy-3-methylbut-2-en-1-yl diphosphate synthase (flavodoxin).